A 686-amino-acid polypeptide reads, in one-letter code: X-linked interleukin-1 receptor accessory protein-like 2 (686 aa).

The N-terminal stretch at 1–16 is a signal peptide; sequence MKLPLLLALVVCSAVS. The Extracellular segment spans residues 17–354; sequence TNLKMVSKRN…LLRKKDLIYK (338 aa). Residues 32 to 132 form the Ig-like C2-type 1 domain; sequence IDWSVDLKTY…YCMKVSMSLT (101 aa). A disulfide bridge connects residues Cys-53 and Cys-116. N-linked (GlcNAc...) asparagine glycosylation is found at Asn-63, Asn-120, Asn-136, Asn-211, and Asn-328. Ig-like C2-type domains are found at residues 141-232 and 239-347; these read CYNS…LKVT and PPKP…VLLR. 2 cysteine pairs are disulfide-bonded: Cys-162–Cys-214 and Cys-265–Cys-331. The chain crosses the membrane as a helical span at residues 355 to 375; it reads IELAGGLGAIFLLLILLLVVY. The Cytoplasmic portion of the chain corresponds to 376–686; that stretch reads KCYNIELMLF…KELSFTSDIW (311 aa). A TIR domain is found at 400–556; it reads KEYDAYLSYT…KFWKHLVYEM (157 aa). Glu-488 is a catalytic residue.

It belongs to the interleukin-1 receptor family. Detected in fetal brain after day 12.5, in particular in parts of the diencephalon and in the basal plate of the spinal cord. In postnatal brain detected in cerebral cortex, olfactory bulb, in the CA1 region of the hippocampus and in Purkinje cells of the Xth cerebellar lobule.

The protein resides in the membrane. The enzyme catalyses NAD(+) + H2O = ADP-D-ribose + nicotinamide + H(+). In Mus musculus (Mouse), this protein is X-linked interleukin-1 receptor accessory protein-like 2 (Il1rapl2).